The sequence spans 208 residues: CASP-like protein 1D1 (208 aa).

Positions 1-36 (MSSVDTEKPAPPPLETEAPPPPPPPPPPPPPPPPPP) are disordered. Residues 1–41 (MSSVDTEKPAPPPLETEAPPPPPPPPPPPPPPPPPPAGYSA) lie on the Cytoplasmic side of the membrane. Residues 9-36 (PAPPPLETEAPPPPPPPPPPPPPPPPPP) show a composition bias toward pro residues. The helical transmembrane segment at 42-62 (LDVVLRILLLGSAVASVVVMV) threads the bilayer. The Extracellular segment spans residues 63-89 (TSVQTKLIAVAGVPVLVSNKAKFQNSP). Residues 90 to 110 (AFIYFVAALSVVGLYSIITTL) traverse the membrane as a helical segment. The Cytoplasmic segment spans residues 111–133 (ASFIFISKPSCSTKTILHLAIWD). The chain crosses the membrane as a helical span at residues 134–154 (VLMLGLAASATGTAGGVAYVG). Residues 155–180 (LKGNSHVGWNKVCNTYDKFCRHVGGS) are Extracellular-facing. The chain crosses the membrane as a helical span at residues 181-201 (IAVALFASILLVLLVWLSLFT). Topologically, residues 202–208 (LYSRIRK) are cytoplasmic.

Belongs to the Casparian strip membrane proteins (CASP) family. Homodimer and heterodimers.

It localises to the cell membrane. The sequence is that of CASP-like protein 1D1 from Vitis vinifera (Grape).